Consider the following 178-residue polypeptide: Probable coatomer subunit zeta-B (178 aa).

This sequence belongs to the adaptor complexes small subunit family. In terms of assembly, oligomeric complex that consists of at least the alpha, beta, beta', gamma, delta, epsilon and zeta subunits.

It is found in the cytoplasm. It localises to the golgi apparatus membrane. Its subcellular location is the cytoplasmic vesicle. The protein resides in the COPI-coated vesicle membrane. The coatomer is a cytosolic protein complex that binds to dilysine motifs and reversibly associates with Golgi non-clathrin-coated vesicles, which further mediate biosynthetic protein transport from the ER, via the Golgi up to the trans Golgi network. Coatomer complex is required for budding from Golgi membranes, and is essential for the retrograde Golgi-to-ER transport of dilysine-tagged proteins. The zeta subunit may be involved in regulating the coat assembly and, hence, the rate of biosynthetic protein transport due to its association-dissociation properties with the coatomer complex. This is Probable coatomer subunit zeta-B (copZb) from Dictyostelium discoideum (Social amoeba).